Here is a 1362-residue protein sequence, read N- to C-terminus: Dicer-like protein 2-2 (1362 aa).

The Helicase ATP-binding domain maps to 30–197; sequence MLNESLKRNL…EIVESNLGSI (168 aa). An ATP-binding site is contributed by 43–50; sequence MPTGTGKT. Residues 139–142 carry the DEAH box motif; it reads DEAH. A Helicase C-terminal domain is found at 343 to 505; sequence LLDELSKAYR…KLQNAERRQI (163 aa). The Dicer dsRNA-binding fold domain maps to 536–630; sequence AVGYLYNFCS…VPTQVSDHLE (95 aa). RNase III domains are found at residues 889-1033 and 1075-1258; these read AQIL…TDGG and IVDM…IDSQ.

The protein belongs to the helicase family. Dicer subfamily.

Functionally, dicer-like endonuclease involved in cleaving double-stranded RNA in the RNA interference (RNAi) pathway. Produces 21 to 25 bp dsRNAs (siRNAs) which target the selective destruction of homologous RNAs leading to sequence-specific suppression of gene expression, called post-transcriptional gene silencing (PTGS). Part of a broad host defense response against viral infection and transposons. The protein is Dicer-like protein 2-2 (dcl2-2) of Aspergillus niger (strain ATCC MYA-4892 / CBS 513.88 / FGSC A1513).